We begin with the raw amino-acid sequence, 299 residues long: Ribosomal RNA small subunit methyltransferase A (299 aa).

Positions 44, 46, 71, 92, 122, and 141 each coordinate S-adenosyl-L-methionine.

It belongs to the class I-like SAM-binding methyltransferase superfamily. rRNA adenine N(6)-methyltransferase family. RsmA subfamily.

It localises to the cytoplasm. The enzyme catalyses adenosine(1518)/adenosine(1519) in 16S rRNA + 4 S-adenosyl-L-methionine = N(6)-dimethyladenosine(1518)/N(6)-dimethyladenosine(1519) in 16S rRNA + 4 S-adenosyl-L-homocysteine + 4 H(+). Functionally, specifically dimethylates two adjacent adenosines (A1518 and A1519) in the loop of a conserved hairpin near the 3'-end of 16S rRNA in the 30S particle. May play a critical role in biogenesis of 30S subunits. This chain is Ribosomal RNA small subunit methyltransferase A, found in Rhodococcus erythropolis (strain PR4 / NBRC 100887).